The chain runs to 196 residues: DnaA initiator-associating protein DiaA (196 aa).

The region spanning L34–D196 is the SIS domain.

Belongs to the SIS family. DiaA subfamily. In terms of assembly, homotetramer; dimer of dimers.

In terms of biological role, required for the timely initiation of chromosomal replication via direct interactions with the DnaA initiator protein. The polypeptide is DnaA initiator-associating protein DiaA (Enterobacter sp. (strain 638)).